Reading from the N-terminus, the 73-residue chain is Ubiquitin-like protein 5 (73 aa).

Positions 1–73 constitute a Ubiquitin-like domain; sequence MIEITCNDRL…DGMNLELYYQ (73 aa).

The protein resides in the cytoplasm. This Drosophila melanogaster (Fruit fly) protein is Ubiquitin-like protein 5 (ubl).